Here is a 91-residue protein sequence, read N- to C-terminus: UPF0358 protein SSP1677 (91 aa).

This sequence belongs to the UPF0358 family.

The sequence is that of UPF0358 protein SSP1677 from Staphylococcus saprophyticus subsp. saprophyticus (strain ATCC 15305 / DSM 20229 / NCIMB 8711 / NCTC 7292 / S-41).